The primary structure comprises 141 residues: Large ribosomal subunit protein uL13 (141 aa).

This sequence belongs to the universal ribosomal protein uL13 family. In terms of assembly, part of the 50S ribosomal subunit.

Its function is as follows. This protein is one of the early assembly proteins of the 50S ribosomal subunit, although it is not seen to bind rRNA by itself. It is important during the early stages of 50S assembly. This chain is Large ribosomal subunit protein uL13, found in Deinococcus deserti (strain DSM 17065 / CIP 109153 / LMG 22923 / VCD115).